Consider the following 128-residue polypeptide: Large ribosomal subunit protein eL32 (128 aa).

It belongs to the eukaryotic ribosomal protein eL32 family.

The sequence is that of Large ribosomal subunit protein eL32 (rpl32e) from Thermoplasma volcanium (strain ATCC 51530 / DSM 4299 / JCM 9571 / NBRC 15438 / GSS1).